The primary structure comprises 381 residues: cAMP-dependent protein kinase type I-alpha regulatory subunit (381 aa).

N-acetylmethionine is present on Met-1. Residues 1–135 are dimerization and phosphorylation; that stretch reads MESGSTAASE…AALAKAIEKN (135 aa). Ser-3 bears the Phosphoserine mark. The interval 64-96 is disordered; sequence QIQNLQKAGTRTDSREDEISPPPPNPVVKGRRR. Thr-75 is modified (phosphothreonine). Ser-77 and Ser-83 each carry phosphoserine. The Pseudophosphorylation motif signature appears at 96 to 100; it reads RRGAI. A Phosphoserine modification is found at Ser-101. Residues 137–254, Glu-202, Arg-211, 255–381, Glu-326, and Arg-335 contribute to the 3',5'-cyclic AMP site; these read LFSH…SKVS and ILES…SLSV. Position 258 is a phosphoserine (Ser-258).

The protein belongs to the cAMP-dependent kinase regulatory chain family. The inactive holoenzyme is composed of two regulatory chains and two catalytic chains. Activation by cAMP releases the two active catalytic monomers and the regulatory dimer. Interacts with PRKACA and PRKACB. PRKAR1A also interacts with RFC2; the complex may be involved in cell survival. Interacts with AKAP4. Interacts with RARA; the interaction occurs in the presence of cAMP or FSH and regulates RARA transcriptional activity. Interacts with the phosphorylated form of PJA2. Interacts with CBFA2T3. Interacts with PRKX; regulates this cAMP-dependent protein kinase. Interacts with smAKAP; this interaction may target PRKAR1A to the plasma membrane. Interacts with AICDA. In terms of processing, the pseudophosphorylation site binds to the substrate-binding region of the catalytic chain, resulting in the inhibition of its activity.

The protein resides in the cell membrane. Regulatory subunit of the cAMP-dependent protein kinases involved in cAMP signaling in cells. This Pongo abelii (Sumatran orangutan) protein is cAMP-dependent protein kinase type I-alpha regulatory subunit (PRKAR1A).